A 172-amino-acid polypeptide reads, in one-letter code: MLSSLKNPRQAAAQLLNFGLILSTAFMMWKGLSVITDSPSPIVVVLSGSMEPAFQRGDLLFLWNRNLLRETDVGEVVVYNVKDKDIPIVHRIVRKFGAGASAKLLTKGDNNAADDTELYARGQDYLERQDIIGSVVAYIPFVGYVTILLSEHPWLKTVMLGIMGLVVVLQRE.

At 1 to 14 the chain is on the cytoplasmic side; sequence MLSSLKNPRQAAAQ. The chain crosses the membrane as a helical; Signal-anchor for type II membrane protein span at residues 15 to 35; it reads LLNFGLILSTAFMMWKGLSVI. The Lumenal segment spans residues 36-172; sequence TDSPSPIVVV…MGLVVVLQRE (137 aa). Active-site charge relay system residues include Ser49, His90, and Asp115. Residues 158–169 form a C-terminal short (CTS) helix region; it reads VMLGIMGLVVVL.

It belongs to the peptidase S26B family. As to quaternary structure, component of the signal peptidase complex (SPC) composed of a catalytic subunit SEC11 and three accessory subunits SPC1, SPC2 and SPC3. The complex induces a local thinning of the ER membrane which is used to measure the length of the signal peptide (SP) h-region of protein substrates. This ensures the selectivity of the complex towards h-regions shorter than 18-20 amino acids. SPC associates with the translocon complex.

The protein resides in the endoplasmic reticulum membrane. It carries out the reaction Cleavage of hydrophobic, N-terminal signal or leader sequences from secreted and periplasmic proteins.. In terms of biological role, catalytic component of the signal peptidase complex (SPC) which catalyzes the cleavage of N-terminal signal sequences from nascent proteins as they are translocated into the lumen of the endoplasmic reticulum. Specifically cleaves N-terminal signal peptides that contain a hydrophobic alpha-helix (h-region) shorter than 18-20 amino acids. The chain is Signal peptidase complex catalytic subunit SEC11 (SEC11) from Verticillium alfalfae (strain VaMs.102 / ATCC MYA-4576 / FGSC 10136) (Verticillium wilt of alfalfa).